Here is a 409-residue protein sequence, read N- to C-terminus: MAAAQRWLPGILRRGDGLARRLYSSASSLLFDDTQEQFKESVHKFAQETIAPHAAAIDASNHFPKDVNLWKLMGDFNLHGLTAPEEYGGMGLGYMYHCIAMEEISRASGSVGLSYGAHSNLCINQLVRHGSPAQKLKYLPKLISGEHVGALAMSEPNSGSDVVSMKCKAEKVDGGYVINGNKMWCTNGPSAQTLVVYAKTDIAAGSKGITAFIIEKGMPGFSTAQKLDKLGMRGSDTCELVFENCFVPHENVLGEEGKGVYVMMSGLDLERLVLAAGPIGLMQACLDVAVPYVRQREQFGRPIGEFQFIQGKLADMYTSLQSSRSFVYSVARDCDNGKVDRKDCAGVILFAAERATQVALQAIQCLGGNGYINEYPTGRLLRDAKLFEIGAGTSEIRRMIIGRELFKEE.

A mitochondrion-targeting transit peptide spans 1 to 22; the sequence is MAAAQRWLPGILRRGDGLARRL. FAD is bound by residues 151-160 and 184-186; these read LAMSEPNSGS and WCT. Residue Ser160 coordinates substrate. Residues 206–207, Tyr261, and 268–271 contribute to the substrate site; these read SK and DLER. Glu270 acts as the Proton acceptor in catalysis. Residues Arg296, Gln307, and 364–368 each bind FAD; that span reads QCLGG. 391 to 392 contacts substrate; it reads AG. An FAD-binding site is contributed by 393 to 395; the sequence is TSE.

The protein belongs to the acyl-CoA dehydrogenase family. As to quaternary structure, homodimer. Requires FAD as cofactor.

The protein localises to the mitochondrion. The enzyme catalyses 3-methylbutanoyl-CoA + oxidized [electron-transfer flavoprotein] + H(+) = 3-methylbut-2-enoyl-CoA + reduced [electron-transfer flavoprotein]. It functions in the pathway amino-acid degradation; L-leucine degradation; (S)-3-hydroxy-3-methylglutaryl-CoA from 3-isovaleryl-CoA: step 1/3. In Oryza sativa subsp. japonica (Rice), this protein is Isovaleryl-CoA dehydrogenase, mitochondrial.